Consider the following 549-residue polypeptide: Cation/acetate symporter ActP (549 aa).

13 helical membrane passes run 33–53 (WQAI…TYWA), 77–97 (LAIA…ALVF), 103–123 (GLIY…LIAE), 148–168 (ILSA…QMVG), 183–203 (IAVV…GMLA), 206–226 (WVQI…AFMV), 262–282 (ISAL…PHIL), 303–323 (GFMG…IMLV), 355–375 (LFLG…VAGL), 404–424 (VSKI…VLFE), 428–448 (IAFM…PIIL), 464–484 (GGWL…TIWV), and 493–513 (IFPY…GIWF).

Belongs to the sodium:solute symporter (SSF) (TC 2.A.21) family.

Its subcellular location is the cell inner membrane. Transports acetate. The chain is Cation/acetate symporter ActP from Salmonella agona (strain SL483).